The following is a 155-amino-acid chain: MSAKKNSHLVFENRKARHLYDLLDFLEAGIVLTGPEVKSLRSGHASFQDSYVDFKQGEGYIVGLHIPPYNNAGYVIQNPDRPRKLLLHRQELKMLASKVEQKGLTIVPLKLYFKNRKVKTEIALAKGRKLYDHRNELKKRAEAMDIKRELAARHL.

Belongs to the SmpB family.

The protein localises to the cytoplasm. Required for rescue of stalled ribosomes mediated by trans-translation. Binds to transfer-messenger RNA (tmRNA), required for stable association of tmRNA with ribosomes. tmRNA and SmpB together mimic tRNA shape, replacing the anticodon stem-loop with SmpB. tmRNA is encoded by the ssrA gene; the 2 termini fold to resemble tRNA(Ala) and it encodes a 'tag peptide', a short internal open reading frame. During trans-translation Ala-aminoacylated tmRNA acts like a tRNA, entering the A-site of stalled ribosomes, displacing the stalled mRNA. The ribosome then switches to translate the ORF on the tmRNA; the nascent peptide is terminated with the 'tag peptide' encoded by the tmRNA and targeted for degradation. The ribosome is freed to recommence translation, which seems to be the essential function of trans-translation. The sequence is that of SsrA-binding protein from Lawsonia intracellularis (strain PHE/MN1-00).